A 145-amino-acid polypeptide reads, in one-letter code: Ribonuclease H (145 aa).

The 142-residue stretch at 1–142 (MDTPVYLYTD…ADDLANRGAA (142 aa)) folds into the RNase H type-1 domain. Mg(2+)-binding residues include Asp10, Glu48, Asp70, and Asp134.

Belongs to the RNase H family. In terms of assembly, monomer. It depends on Mg(2+) as a cofactor.

Its subcellular location is the cytoplasm. The enzyme catalyses Endonucleolytic cleavage to 5'-phosphomonoester.. Its function is as follows. Endonuclease that specifically degrades the RNA of RNA-DNA hybrids. The polypeptide is Ribonuclease H (Neisseria gonorrhoeae (strain ATCC 700825 / FA 1090)).